A 158-amino-acid chain; its full sequence is MFRIGQGFDVHQLVEGRPLIIGGIEIPYEKGLLGHSDADVLLHTVADACLGAVGEGDIGKHFPDTDPEFKDADSFKLLQHVWGIVKQKGYVLGNIDCTIIAQKPKMLPYIEDMRKRIAEGLEADVSQVNVKATTTEKLGFTGRAEGIAAQATVLIQKG.

Asp9 and His11 together coordinate a divalent metal cation. Residues 9–11 and 35–36 contribute to the 4-CDP-2-C-methyl-D-erythritol 2-phosphate site; these read DVH and HS. Position 43 (His43) interacts with a divalent metal cation. Residues 57–59, 62–66, 101–107, 133–136, Phe140, and Arg143 contribute to the 4-CDP-2-C-methyl-D-erythritol 2-phosphate site; these read DIG, FPDTD, AQKPKML, and TTTE.

This sequence belongs to the IspF family. Homotrimer. Requires a divalent metal cation as cofactor.

It carries out the reaction 4-CDP-2-C-methyl-D-erythritol 2-phosphate = 2-C-methyl-D-erythritol 2,4-cyclic diphosphate + CMP. It participates in isoprenoid biosynthesis; isopentenyl diphosphate biosynthesis via DXP pathway; isopentenyl diphosphate from 1-deoxy-D-xylulose 5-phosphate: step 4/6. Its function is as follows. Involved in the biosynthesis of isopentenyl diphosphate (IPP) and dimethylallyl diphosphate (DMAPP), two major building blocks of isoprenoid compounds. Catalyzes the conversion of 4-diphosphocytidyl-2-C-methyl-D-erythritol 2-phosphate (CDP-ME2P) to 2-C-methyl-D-erythritol 2,4-cyclodiphosphate (ME-CPP) with a corresponding release of cytidine 5-monophosphate (CMP). In Bacillus subtilis (strain 168), this protein is 2-C-methyl-D-erythritol 2,4-cyclodiphosphate synthase.